The sequence spans 1063 residues: DNA-directed RNA polymerase subunit beta (1063 aa).

The protein belongs to the RNA polymerase beta chain family. As to quaternary structure, in plastids the minimal PEP RNA polymerase catalytic core is composed of four subunits: alpha, beta, beta', and beta''. When a (nuclear-encoded) sigma factor is associated with the core the holoenzyme is formed, which can initiate transcription.

The protein localises to the plastid. The protein resides in the chloroplast. The enzyme catalyses RNA(n) + a ribonucleoside 5'-triphosphate = RNA(n+1) + diphosphate. In terms of biological role, DNA-dependent RNA polymerase catalyzes the transcription of DNA into RNA using the four ribonucleoside triphosphates as substrates. This Zygnema circumcarinatum (Green alga) protein is DNA-directed RNA polymerase subunit beta.